Here is a 122-residue protein sequence, read N- to C-terminus: Probable F-box protein At4g23960 (122 aa).

One can recognise an F-box domain in the interval 1–45 (MIEQLFPEVTCYALRYLDYSSLCQLSMTSSSMRKTANDDVLWRAL).

In Arabidopsis thaliana (Mouse-ear cress), this protein is Probable F-box protein At4g23960.